The following is a 524-amino-acid chain: MAGRKSSRTAERVPTTQKPERKSAILSPHDELRERLLETAIDMKENIPQRNTRNSSVGSQKSDCSETRKRRSTKEGPAAKRHSGEKHRNGSREDSLEYISEYSDDREVGSSSSQSSRTRGQPLPAMPEEEEVFDKSSSSDNLAESEESHEMVRLEERQDIEEEIEDDFDDEEEDVVNDKEEYEEIESEDEDDYPVQNEGFAVTKRLMNDEHMVTAPTFLSTAKCDGIGSPTKVWSLMVKRDEIPRATRFLLGNHPDMDDEKRRILIDWMMEVCESEKLHRETFHLAVDYVDRYLESSNVECSTDNFQLVGTAALFIAAKYEEIYPPKCIDFAHLTDSAFTCDNIRTMEVLIVKYIGWSLGPITSIQWLSTYLQLLGTGKKNKSDHYEEQNMYVPELLRSEYLEMCKILDFLLFEIDSFTFSYRTIAAAVLFVNYEPTCAVEKATGFMQAQLEKVIEYVEPVCRAFAKQRQLLDDVIPKHESIKSDDSHNIQVYVKRSSMEPIVKSERERIQHLKARRLHPQRLF.

A disordered region spans residues 1–155; sequence MAGRKSSRTA…EESHEMVRLE (155 aa). The segment covering 18 to 47 has biased composition (basic and acidic residues); that stretch reads KPERKSAILSPHDELRERLLETAIDMKENI. The span at 48-62 shows a compositional bias: polar residues; it reads PQRNTRNSSVGSQKS. Composition is skewed to basic and acidic residues over residues 63–78, 86–95, and 146–155; these read DCSETRKRRSTKEGPA, KHRNGSREDS, and EESHEMVRLE.

It belongs to the cyclin family. Cyclin E subfamily. In terms of assembly, interacts with a member of the CDK2/CDK protein kinases to form a serine/threonine kinase holoenzyme complex. The cyclin subunit imparts substrate specificity to the complex. In terms of tissue distribution, expressed dynamically in proliferating cells throughout development. Detectable in larval blast cells undergoing active proliferation that give rise to all tissue types, including germline, intestine, hypodermis, neurons, and muscle.

Its subcellular location is the nucleus. The protein resides in the cytoplasm. It localises to the cytoskeleton. The protein localises to the microtubule organizing center. It is found in the centrosome. Its subcellular location is the centriole. Its function is as follows. Essential for the control of the cell cycle at the G1/S (start) transition. In association with cdk-2, regulates proliferation, quiescent state and cell fate during the development of several cell lineages. In the embryo, initiates the establishment of cell polarity through the recruitment of the centrosomal proteins spd-2 and spd-5 during prophase. During the development of the vulva, controls the onset of vulval cell terminal differentiation by controlling the duration of G1 phase. During hypoderm development at early larval stages, controls syncytial fate of seam cell daughter cells. Involved in the progression of cell division in the intestinal lineage in larvae, and in particular in endoreplication, a specific growth pathway in the intestinal epithelium, required for feeding and gut development in growing larvae. By controlling the activity of translational repressor gld-1, regulates the pool of germline stem cells and the size of the mitotic zone by preventing entry into meiosis. In addition, repression of expression by gld-1 prevents mitosis re-entry in meiotic germline cells. This is G1/S-specific cyclin-E from Caenorhabditis elegans.